Consider the following 428-residue polypeptide: Cyclin-B1-1 (428 aa).

Belongs to the cyclin family. Cyclin AB subfamily. In terms of assembly, interacts with FZR2/CCS52A1, FZR1/CCS52A2 and FZR3/CCS52B. In terms of tissue distribution, expressed in root tip, lateral root apex, shoot apex, leaf primordia, axillary buds, stamen and petal primordia, ovules and developing embryo.

Its subcellular location is the nucleus. The chain is Cyclin-B1-1 (CYCB1-1) from Arabidopsis thaliana (Mouse-ear cress).